Consider the following 480-residue polypeptide: UDP-N-acetylmuramoyl-L-alanyl-D-glutamate--2,6-diaminopimelate ligase (480 aa).

Serine 21 provides a ligand contact to UDP-N-acetyl-alpha-D-muramoyl-L-alanyl-D-glutamate. Position 98 to 104 (98 to 104 (GTNGKSS)) interacts with ATP. UDP-N-acetyl-alpha-D-muramoyl-L-alanyl-D-glutamate contacts are provided by residues 144–145 (TT), serine 171, glutamine 177, and arginine 179. Lysine 211 carries the post-translational modification N6-carboxylysine. Meso-2,6-diaminopimelate contacts are provided by residues arginine 372, 396–399 (DNPR), glycine 446, and glutamate 450. The Meso-diaminopimelate recognition motif signature appears at 396-399 (DNPR).

Belongs to the MurCDEF family. MurE subfamily. It depends on Mg(2+) as a cofactor. In terms of processing, carboxylation is probably crucial for Mg(2+) binding and, consequently, for the gamma-phosphate positioning of ATP.

It localises to the cytoplasm. The catalysed reaction is UDP-N-acetyl-alpha-D-muramoyl-L-alanyl-D-glutamate + meso-2,6-diaminopimelate + ATP = UDP-N-acetyl-alpha-D-muramoyl-L-alanyl-gamma-D-glutamyl-meso-2,6-diaminopimelate + ADP + phosphate + H(+). It functions in the pathway cell wall biogenesis; peptidoglycan biosynthesis. Functionally, catalyzes the addition of meso-diaminopimelic acid to the nucleotide precursor UDP-N-acetylmuramoyl-L-alanyl-D-glutamate (UMAG) in the biosynthesis of bacterial cell-wall peptidoglycan. In Rickettsia prowazekii (strain Madrid E), this protein is UDP-N-acetylmuramoyl-L-alanyl-D-glutamate--2,6-diaminopimelate ligase.